We begin with the raw amino-acid sequence, 446 residues long: MMITLRKLPLAVAVAAGVMSAQAMAVDFHGYARSGIGWTGSGGEQQCFQTTGAQSKYRLGNECETYAELKLGQEVWKEGDKSFYFDTNVAYSVAQQNDWEATDPAFREANVQGKNLIEWLPGSTIWAGKRFYQRHDVHMIDFYYWDISGPGAGLENIDVGFGKLSLAATRSSEAGGSSSFASNNIYDYTNETANDVFDVRLAQMEVNPGGTLELGVDYGRANLRDNYRLVDGASKDGWLFTAEHTQSVLKGFNKFVVQYATDSMTSQGKGLSQGSGVAFDNEKFAYNINNNGHMLRILDHGAISMGDNWDMMYVGMYQDINWDNDNGTKWWTVGIRPMYKWTPIMSTVMEIGYDNVESQRTGDKNNQYKITLAQQWQAGDSIWSRPAIRVFATYAKWDEKWGYDYNGDSKVNPNYGKAVPADFNGGSFGRGDSDEWTFGAQMEIWW.

The first 25 residues, Met1 to Ala25, serve as a signal peptide directing secretion.

Belongs to the porin LamB (TC 1.B.3) family. As to quaternary structure, homotrimer formed of three 18-stranded antiparallel beta-barrels, containing three independent channels.

Its subcellular location is the cell outer membrane. The catalysed reaction is beta-maltose(in) = beta-maltose(out). Functionally, involved in the transport of maltose and maltodextrins. The chain is Maltoporin from Escherichia coli O157:H7 (strain EC4115 / EHEC).